The primary structure comprises 358 residues: Probable ABC transporter periplasmic-binding protein y4fP (358 aa).

The N-terminal stretch at 1-46 (MRNVIKLTWSRRKRSASLDKGENIMKLAFAFATAAIVVAAAFPALA) is a signal peptide.

This sequence belongs to the bacterial solute-binding protein 1 family.

The protein localises to the periplasm. Probably part of the binding-protein-dependent transport system y4fNOP. This chain is Probable ABC transporter periplasmic-binding protein y4fP, found in Sinorhizobium fredii (strain NBRC 101917 / NGR234).